The following is a 212-amino-acid chain: Ribosomal RNA large subunit methyltransferase E (212 aa).

Residues Gly57, Trp59, Asp77, Asp93, and Asp122 each contribute to the S-adenosyl-L-methionine site. Lys162 acts as the Proton acceptor in catalysis.

Belongs to the class I-like SAM-binding methyltransferase superfamily. RNA methyltransferase RlmE family.

Its subcellular location is the cytoplasm. It carries out the reaction uridine(2552) in 23S rRNA + S-adenosyl-L-methionine = 2'-O-methyluridine(2552) in 23S rRNA + S-adenosyl-L-homocysteine + H(+). Specifically methylates the uridine in position 2552 of 23S rRNA at the 2'-O position of the ribose in the fully assembled 50S ribosomal subunit. The protein is Ribosomal RNA large subunit methyltransferase E of Coxiella burnetii (strain RSA 331 / Henzerling II).